A 695-amino-acid polypeptide reads, in one-letter code: Glycine--tRNA ligase beta subunit (695 aa).

It belongs to the class-II aminoacyl-tRNA synthetase family. As to quaternary structure, tetramer of two alpha and two beta subunits.

The protein localises to the cytoplasm. It carries out the reaction tRNA(Gly) + glycine + ATP = glycyl-tRNA(Gly) + AMP + diphosphate. The chain is Glycine--tRNA ligase beta subunit from Desulforamulus reducens (strain ATCC BAA-1160 / DSM 100696 / MI-1) (Desulfotomaculum reducens).